Consider the following 1050-residue polypeptide: Isoleucine--tRNA ligase (1050 aa).

Positions 45–56 (PYPSSPIPHIGT) match the 'HIGH' region motif. The short motif at 594-598 (EMHKS) is the 'KMSKS' region element. Lys597 is an ATP binding site.

The protein belongs to the class-I aminoacyl-tRNA synthetase family. IleS type 2 subfamily. In terms of assembly, monomer. Zn(2+) serves as cofactor.

Its subcellular location is the cytoplasm. It carries out the reaction tRNA(Ile) + L-isoleucine + ATP = L-isoleucyl-tRNA(Ile) + AMP + diphosphate. Functionally, catalyzes the attachment of isoleucine to tRNA(Ile). As IleRS can inadvertently accommodate and process structurally similar amino acids such as valine, to avoid such errors it has two additional distinct tRNA(Ile)-dependent editing activities. One activity is designated as 'pretransfer' editing and involves the hydrolysis of activated Val-AMP. The other activity is designated 'posttransfer' editing and involves deacylation of mischarged Val-tRNA(Ile). The polypeptide is Isoleucine--tRNA ligase (Sulfolobus acidocaldarius (strain ATCC 33909 / DSM 639 / JCM 8929 / NBRC 15157 / NCIMB 11770)).